Consider the following 479-residue polypeptide: Monodictyphenone cluster transcriptional coactivator mdpA (479 aa).

The HTH iclR-type domain occupies 77–147 (LAVQNQLLAC…DPGQVAHSAL (71 aa)). A DNA-binding region (H-T-H motif) is located at residues 107–126 (IKDVAELAGVPETHLSRIIR). Disordered stretches follow at residues 281–305 (GPTAWSPAHPNPIRPPTPGGSHKHD) and 314–333 (TASTTPASSHNHTHTHTTNS). Residues 289-298 (HPNPIRPPTP) are compositionally biased toward pro residues. Over residues 314-323 (TASTTPASSH) the composition is skewed to low complexity.

It is found in the nucleus. In terms of biological role, transcriptional coactivator; part of the gene cluster that mediates the biosynthesis of monodictyphenone, a prenyl xanthone derivative. With mdpE, coregulates the production of monodictyphenone. This chain is Monodictyphenone cluster transcriptional coactivator mdpA, found in Emericella nidulans (strain FGSC A4 / ATCC 38163 / CBS 112.46 / NRRL 194 / M139) (Aspergillus nidulans).